A 139-amino-acid polypeptide reads, in one-letter code: Invertebrate-type lysozyme 3 (139 aa).

The N-terminal stretch at 1-18 (MFVKSLVFLTIAVAYASA) is a signal peptide. The I-type lysozyme domain maps to 19–138 (DCLHCICMRE…WNGIKSCCGC (120 aa)). 7 disulfides stabilise this stretch: Cys-20–Cys-106, Cys-23–Cys-138, Cys-25–Cys-31, Cys-36–Cys-45, Cys-58–Cys-86, Cys-76–Cys-82, and Cys-98–Cys-120. The active-site Proton donor is Glu-28. Asp-39 functions as the Nucleophile in the catalytic mechanism. Residue 51 to 57 (KLPYYED) coordinates substrate. Residues Tyr-90 and 113-115 (HNG) each bind substrate.

It belongs to the glycosyl hydrolase 22 family. Type-I lysozyme subfamily. As to expression, expressed in pharynx grinder muscle pm7, isthmus marginal cell mc2 and pharyngeal muscle cell pm5, intestinal cells and at lower levels in coelomocytes and epidermis. Expressed at low levels in intestine.

The protein resides in the late endosome lumen. Its subcellular location is the recycling endosome lumen. It localises to the lysosome lumen. It is found in the secreted. The enzyme catalyses Hydrolysis of (1-&gt;4)-beta-linkages between N-acetylmuramic acid and N-acetyl-D-glucosamine residues in a peptidoglycan and between N-acetyl-D-glucosamine residues in chitodextrins.. Functionally, has bacteriolytic activity against Gram-positive bacteria. Plays a role in defense against bacterial pathogens. Involved in pharyngeal grinder function by enabling proper lysis of ingested bacteria. The protein is Invertebrate-type lysozyme 3 of Caenorhabditis elegans.